The chain runs to 156 residues: Ribosome maturation factor RimP (156 aa).

This sequence belongs to the RimP family.

It is found in the cytoplasm. In terms of biological role, required for maturation of 30S ribosomal subunits. The sequence is that of Ribosome maturation factor RimP from Gloeobacter violaceus (strain ATCC 29082 / PCC 7421).